The following is a 207-amino-acid chain: Protein FMP32, mitochondrial (207 aa).

A coiled-coil region spans residues 100–136; sequence ADRSEFHNIQNEYESVKNDLEKLRNKLREEITKTNAG. A helical membrane pass occupies residues 184-206; it reads VMQWLIGVCTGTFALVLAYMRLL.

The protein belongs to the CCDC90 family.

It is found in the mitochondrion. It localises to the membrane. The sequence is that of Protein FMP32, mitochondrial (FMP32) from Saccharomyces cerevisiae (strain ATCC 204508 / S288c) (Baker's yeast).